Reading from the N-terminus, the 71-residue chain is Small ribosomal subunit protein bS21 (71 aa).

The disordered stretch occupies residues Lys40–Tyr71. The segment covering Gln43–Arg59 has biased composition (basic residues). Residues Leu60–Tyr71 show a composition bias toward basic and acidic residues.

Belongs to the bacterial ribosomal protein bS21 family.

This chain is Small ribosomal subunit protein bS21, found in Halorhodospira halophila (strain DSM 244 / SL1) (Ectothiorhodospira halophila (strain DSM 244 / SL1)).